The following is a 441-amino-acid chain: Methylenetetrahydrofolate--tRNA-(uracil-5-)-methyltransferase TrmFO (441 aa).

11-16 (GGGLAG) is an FAD binding site.

It belongs to the MnmG family. TrmFO subfamily. Requires FAD as cofactor.

The protein resides in the cytoplasm. It catalyses the reaction uridine(54) in tRNA + (6R)-5,10-methylene-5,6,7,8-tetrahydrofolate + NADH + H(+) = 5-methyluridine(54) in tRNA + (6S)-5,6,7,8-tetrahydrofolate + NAD(+). The enzyme catalyses uridine(54) in tRNA + (6R)-5,10-methylene-5,6,7,8-tetrahydrofolate + NADPH + H(+) = 5-methyluridine(54) in tRNA + (6S)-5,6,7,8-tetrahydrofolate + NADP(+). Its function is as follows. Catalyzes the folate-dependent formation of 5-methyl-uridine at position 54 (M-5-U54) in all tRNAs. In Syntrophus aciditrophicus (strain SB), this protein is Methylenetetrahydrofolate--tRNA-(uracil-5-)-methyltransferase TrmFO.